The chain runs to 431 residues: Glucose-1-phosphate adenylyltransferase (431 aa).

Lys39 provides a ligand contact to beta-D-fructose 1,6-bisphosphate. Residues Arg40, His46, and Arg52 each contribute to the AMP site. Position 114 (Tyr114) interacts with alpha-D-glucose 1-phosphate. Arg130 is an AMP binding site. Residues Gly179, 194-195, and Ser212 contribute to the alpha-D-glucose 1-phosphate site; that span reads EK. Glu370 and Arg386 together coordinate AMP. Beta-D-fructose 1,6-bisphosphate-binding positions include 419-423 and 429-431; these read REMLR and QER.

This sequence belongs to the bacterial/plant glucose-1-phosphate adenylyltransferase family. As to quaternary structure, homotetramer.

It catalyses the reaction alpha-D-glucose 1-phosphate + ATP + H(+) = ADP-alpha-D-glucose + diphosphate. Its pathway is glycan biosynthesis; glycogen biosynthesis. With respect to regulation, allosterically activated by fructose-1,6-bisphosphate (F16BP) and inhibited by AMP. Functionally, involved in the biosynthesis of ADP-glucose, a building block required for the elongation reactions to produce glycogen. Catalyzes the reaction between ATP and alpha-D-glucose 1-phosphate (G1P) to produce pyrophosphate and ADP-Glc. In Salmonella paratyphi C (strain RKS4594), this protein is Glucose-1-phosphate adenylyltransferase.